Consider the following 122-residue polypeptide: Large ribosomal subunit protein uL14 (122 aa).

This sequence belongs to the universal ribosomal protein uL14 family. As to quaternary structure, part of the 50S ribosomal subunit. Forms a cluster with proteins L3 and L19. In the 70S ribosome, L14 and L19 interact and together make contacts with the 16S rRNA in bridges B5 and B8.

In terms of biological role, binds to 23S rRNA. Forms part of two intersubunit bridges in the 70S ribosome. The polypeptide is Large ribosomal subunit protein uL14 (Alkaliphilus oremlandii (strain OhILAs) (Clostridium oremlandii (strain OhILAs))).